We begin with the raw amino-acid sequence, 434 residues long: 3-phosphoshikimate 1-carboxyvinyltransferase (434 aa).

K22, S23, and R27 together coordinate 3-phosphoshikimate. K22 lines the phosphoenolpyruvate pocket. Residues G93 and R121 each coordinate phosphoenolpyruvate. 3-phosphoshikimate is bound by residues S168, S169, Q170, S199, D320, and K347. Q170 lines the phosphoenolpyruvate pocket. The active-site Proton acceptor is the D320. Phosphoenolpyruvate contacts are provided by R351, R395, and K420.

It belongs to the EPSP synthase family. In terms of assembly, monomer.

It localises to the cytoplasm. It catalyses the reaction 3-phosphoshikimate + phosphoenolpyruvate = 5-O-(1-carboxyvinyl)-3-phosphoshikimate + phosphate. It participates in metabolic intermediate biosynthesis; chorismate biosynthesis; chorismate from D-erythrose 4-phosphate and phosphoenolpyruvate: step 6/7. Functionally, catalyzes the transfer of the enolpyruvyl moiety of phosphoenolpyruvate (PEP) to the 5-hydroxyl of shikimate-3-phosphate (S3P) to produce enolpyruvyl shikimate-3-phosphate and inorganic phosphate. The protein is 3-phosphoshikimate 1-carboxyvinyltransferase of Cupriavidus necator (strain ATCC 17699 / DSM 428 / KCTC 22496 / NCIMB 10442 / H16 / Stanier 337) (Ralstonia eutropha).